The following is a 99-amino-acid chain: Cell division protein FtsB (99 aa).

Topologically, residues 1-3 are cytoplasmic; sequence MKF. The chain crosses the membrane as a helical span at residues 4 to 21; the sequence is FVIALIVLLGLLQYRLWS. The Periplasmic portion of the chain corresponds to 22–99; sequence GDNSLPEYFV…GDRSVSSPSQ (78 aa). Residues 31–73 adopt a coiled-coil conformation; sequence VLQKQIAAQQEGNAKLNERNQVLKEEIIDLKSGTEAIEERARN.

The protein belongs to the FtsB family. As to quaternary structure, part of a complex composed of FtsB, FtsL and FtsQ.

It is found in the cell inner membrane. Functionally, essential cell division protein. May link together the upstream cell division proteins, which are predominantly cytoplasmic, with the downstream cell division proteins, which are predominantly periplasmic. This is Cell division protein FtsB from Shewanella sp. (strain ANA-3).